We begin with the raw amino-acid sequence, 352 residues long: Transcription factor BHLH156 (352 aa).

The interval 59 to 141 (GGDDDDNGGV…RSKTIVSERK (83 aa)) is disordered. The tract at residues 130–143 (RDRSKTIVSERKRR) is basic motif. Positions 130–179 (RDRSKTIVSERKRRVRMKEKLYELRALVPNITKMDKASIIADAVVYVKDL) constitute a bHLH domain. A helix-loop-helix motif region spans residues 144-179 (VRMKEKLYELRALVPNITKMDKASIIADAVVYVKDL). Residues 194 to 216 (EEARPIRPPPPSAAAQRPQRQPR) form a disordered region. A compositionally biased stretch (low complexity) spans 206–216 (AAAQRPQRQPR).

The protein belongs to the bHLH protein family. Forms homodimers. Interacts with IRO2 in the nucleus. As to expression, expressed in the meristematic zone of lateral and primary roots.

The protein localises to the nucleus. In terms of biological role, transcription factor involved in positive regulation of genes involved in strategy II iron acquisition, including genes for mugineic acid (MA) family phytosiderophores biosynthesis, and genes involved in S-adenosylmethionine cycle and iron transport. May play a role in the regulation of iron deficiency response by promoting the nuclear localization of IRO2. Possesses transactivation activity in yeast. The sequence is that of Transcription factor BHLH156 from Oryza sativa subsp. japonica (Rice).